A 76-amino-acid polypeptide reads, in one-letter code: Dermaseptin-B4 (76 aa).

Residues 1–22 (MAFLKKSLFLVLFLGLVSLSIC) form the signal peptide. A propeptide spanning residues 23 to 43 (EEEKRENKDEIEQEDDEQSEE) is cleaved from the precursor. A Glutamine amide modification is found at Gln-73. A propeptide spanning residues 75-76 (EQ) is cleaved from the precursor.

This sequence belongs to the frog skin active peptide (FSAP) family. Dermaseptin subfamily. In terms of tissue distribution, expressed by the skin glands.

The protein localises to the secreted. In terms of biological role, potent antimicrobial peptide with potent activity against Gram-positive and Gram-negative bacteria. Probably acts by disturbing membrane functions with its amphipathic structure. Has an activity of stimulation of insulin release, which may protect the species from being eaten by predators by causing fatal hypoglycemia. Has hemolytic activity. This is Dermaseptin-B4 from Phyllomedusa bicolor (Two-colored leaf frog).